We begin with the raw amino-acid sequence, 153 residues long: Transcriptional repressor NrdR (153 aa).

A zinc finger lies at C3–C34. One can recognise an ATP-cone domain in the interval L49 to R136.

This sequence belongs to the NrdR family. It depends on Zn(2+) as a cofactor.

Negatively regulates transcription of bacterial ribonucleotide reductase nrd genes and operons by binding to NrdR-boxes. The polypeptide is Transcriptional repressor NrdR (Thermus thermophilus (strain ATCC BAA-163 / DSM 7039 / HB27)).